Reading from the N-terminus, the 143-residue chain is Large ribosomal subunit protein uL13 (143 aa).

Belongs to the universal ribosomal protein uL13 family. As to quaternary structure, part of the 50S ribosomal subunit.

Its function is as follows. This protein is one of the early assembly proteins of the 50S ribosomal subunit, although it is not seen to bind rRNA by itself. It is important during the early stages of 50S assembly. This is Large ribosomal subunit protein uL13 from Variovorax paradoxus (strain S110).